The primary structure comprises 72 residues: Translation initiation factor IF-1 2 (72 aa).

The 72-residue stretch at 1–72 (MAKEDAIEVD…KRGRITYRMK (72 aa)) folds into the S1-like domain.

It belongs to the IF-1 family. In terms of assembly, component of the 30S ribosomal translation pre-initiation complex which assembles on the 30S ribosome in the order IF-2 and IF-3, IF-1 and N-formylmethionyl-tRNA(fMet); mRNA recruitment can occur at any time during PIC assembly.

Its subcellular location is the cytoplasm. Functionally, one of the essential components for the initiation of protein synthesis. Stabilizes the binding of IF-2 and IF-3 on the 30S subunit to which N-formylmethionyl-tRNA(fMet) subsequently binds. Helps modulate mRNA selection, yielding the 30S pre-initiation complex (PIC). Upon addition of the 50S ribosomal subunit IF-1, IF-2 and IF-3 are released leaving the mature 70S translation initiation complex. In Nitratidesulfovibrio vulgaris (strain DP4) (Desulfovibrio vulgaris), this protein is Translation initiation factor IF-1 2.